A 376-amino-acid chain; its full sequence is Protein PROCA1 (376 aa).

The span at 180–191 (LNQEEEEEEEEE) shows a compositional bias: acidic residues. Residues 180–376 (LNQEEEEEEE…SPPASNPNLS (197 aa)) are disordered. Low complexity predominate over residues 202–211 (PTPTDSPTDT). Residues 230–241 (RSESPTGKSQGN) are compositionally biased toward polar residues. Residues 243-252 (VIKKIKKKKE) show a composition bias toward basic residues. The span at 253-264 (KDKEEETDEKEK) shows a compositional bias: basic and acidic residues. Basic residues predominate over residues 265–282 (AKVKKKVKKGKLMKKKSP). Residues 284-298 (KSESPPDLSRSLSPR) are compositionally biased toward low complexity. Residues serine 319, serine 329, serine 330, serine 367, and serine 376 each carry the phosphoserine modification.

This sequence belongs to the PROCA1 family.

In Bos taurus (Bovine), this protein is Protein PROCA1 (PROCA1).